The primary structure comprises 346 residues: MMCSNNISDYKLLEILKNGMIGTVYKAEDINNKCLAVKKVSMDQPMEKLTLLFNEVLTVRRLQHRNINTIVSCFLYKQYVYLTYKFMCFGNCEVLLKNVYTSGFPEVAIALILKDVLSALTYIHSEHYVHGSVRAKHILLSPRKAVLSNFSYCQSFISQGEKKTFIFGSTVGIEKELYWTAPEVLYQNLSGYTEKIDIYSIGITCCEMANGFQPFKDTELTYMYIEKVRGSLQVLLDKNSLLENQGSLSLEHTNKRIARDVIVNKSFSENFHQFVELCLNKNPLSRWAASKLMTHSFLKQCRNTSLLDQLKDLGQKMSKFKRNEHEIFSDARGSHNPQPNDTIWKF.

The region spanning 10-298 is the Protein kinase domain; that stretch reads YKLLEILKNG…ASKLMTHSFL (289 aa). ATP contacts are provided by residues 16–24 and lysine 38; that span reads LKNGMIGTV.

Belongs to the protein kinase superfamily. STE Ser/Thr protein kinase family. STE20 subfamily.

The polypeptide is STE20-related kinase adapter protein stlk (Drosophila melanogaster (Fruit fly)).